We begin with the raw amino-acid sequence, 125 residues long: Small ribosomal subunit protein uS12 (125 aa).

The interval 1 to 27 is disordered; the sequence is MPTINQLVRKGREKGEQKSTAPALKSC. Residue D89 is modified to 3-methylthioaspartic acid. The segment at 103 to 125 is disordered; sequence DASGVQKRNQGRSKYGTKRPKKK. Positions 111-125 are enriched in basic residues; that stretch reads NQGRSKYGTKRPKKK.

The protein belongs to the universal ribosomal protein uS12 family. Part of the 30S ribosomal subunit. Contacts proteins S8 and S17. May interact with IF1 in the 30S initiation complex.

With S4 and S5 plays an important role in translational accuracy. Its function is as follows. Interacts with and stabilizes bases of the 16S rRNA that are involved in tRNA selection in the A site and with the mRNA backbone. Located at the interface of the 30S and 50S subunits, it traverses the body of the 30S subunit contacting proteins on the other side and probably holding the rRNA structure together. The combined cluster of proteins S8, S12 and S17 appears to hold together the shoulder and platform of the 30S subunit. In Syntrophomonas wolfei subsp. wolfei (strain DSM 2245B / Goettingen), this protein is Small ribosomal subunit protein uS12.